The following is a 419-amino-acid chain: Carboxypeptidase A1 (419 aa).

The first 16 residues, 1–16 (MRGLLVLSVLLGAVFG), serve as a signal peptide directing secretion. The propeptide at 17–110 (KEDFVGHQVL…QEQMFAFRSR (94 aa)) is activation peptide. A Peptidase M14 domain is found at 121 to 414 (TYHTLEEIYD…LALLTIMEHT (294 aa)). Zn(2+) contacts are provided by His179 and Glu182. Substrate-binding positions include 179-182 (HSRE), Arg237, and 254-255 (NR). Cysteines 248 and 271 form a disulfide. Residue His306 coordinates Zn(2+). Residues 307–308 (SY) and Tyr358 each bind substrate. The Proton donor/acceptor role is filled by Glu380.

It belongs to the peptidase M14 family. As to quaternary structure, monomer. May form a complex with proelastase 2. Requires Zn(2+) as cofactor.

The protein resides in the secreted. The enzyme catalyses Release of a C-terminal amino acid, but little or no action with -Asp, -Glu, -Arg, -Lys or -Pro.. It catalyses the reaction leukotriene C4 + H2O = leukotriene F4 + glycine. Inhibited by interaction with the S.magnifica carboxypeptidase inhibitor SmCI. Its function is as follows. Carboxypeptidase that catalyzes the release of a C-terminal amino acid, but has little or no action with -Asp, -Glu, -Arg, -Lys or -Pro. Catalyzes the conversion of leukotriene C4 to leukotriene F4 via the hydrolysis of an amide bond. This chain is Carboxypeptidase A1, found in Homo sapiens (Human).